The chain runs to 1385 residues: Coiled-coil domain-containing protein 7 (1385 aa).

A coiled-coil region spans residues 299-330 (LDAEYKQMQCDFQLLSEEKLVLENELQKLKDK). The segment at 329-364 (DKEKTKPTNNRTKKAVKTVKKKDKGKSEDSEKKMSP) is disordered. Basic residues predominate over residues 339–352 (RTKKAVKTVKKKDK). Residues 353-364 (GKSEDSEKKMSP) are compositionally biased toward basic and acidic residues. Residues 374 to 411 (LDQVQKVARLEIENKVLQEQLKQALQEAEKAKHQLNYF) adopt a coiled-coil conformation. Disordered stretches follow at residues 422–545 (GKTE…SKEV), 572–752 (TESK…EPNE), and 809–834 (TKKL…LKHQ). The segment covering 425–436 (ETTMQVGNSQTK) has biased composition (polar residues). Basic and acidic residues-rich tracts occupy residues 437–455 (VKGE…RKSL) and 481–490 (LIEKSSEKKR). Composition is skewed to polar residues over residues 493-503 (PAISDLSQILK), 511-528 (LESS…YKSP), and 536-545 (LTTVSSSKEV). Residues 573–589 (ESKKADVSEEQLQKMTE) are compositionally biased toward basic and acidic residues. The span at 654 to 664 (RIQSETKNLKA) shows a compositional bias: polar residues. Basic and acidic residues-rich tracts occupy residues 665–676 (TRNESFHSHNDV) and 685–697 (QDTK…EVKK). The segment covering 701–711 (FQDNQLSTHNE) has biased composition (polar residues). The span at 712–726 (VPNERLVVEHQESLS) shows a compositional bias: basic and acidic residues.

As to expression, expressed in epithelium of normal cervix and cervical cancer. Overexpressed in early and interim cervical cancer.

Its function is as follows. May play a role in tumorigenesis. In Homo sapiens (Human), this protein is Coiled-coil domain-containing protein 7 (CCDC7).